Here is a 319-residue protein sequence, read N- to C-terminus: Nuclear hormone receptor family member nhr-174 (319 aa).

The segment at residues 7–81 (DPVCPVCEFP…AGMKRNLVRQ (75 aa)) is a DNA-binding region (nuclear receptor). 2 consecutive NR C4-type zinc fingers follow at residues 10–31 (CPVCEFPSNVELHFGGLVCGAC) and 47–63 (CEKKNQCKGKRKNCRAC). The NR LBD domain maps to 130–319 (EAEKDVSKIL…SMKKSRYLQF (190 aa)).

The protein belongs to the nuclear hormone receptor family.

It is found in the nucleus. Functionally, orphan nuclear receptor. The chain is Nuclear hormone receptor family member nhr-174 (nhr-174) from Caenorhabditis elegans.